Consider the following 244-residue polypeptide: Probable transcriptional regulatory protein Xfasm12_1059 (244 aa).

It belongs to the TACO1 family.

The protein localises to the cytoplasm. The protein is Probable transcriptional regulatory protein Xfasm12_1059 of Xylella fastidiosa (strain M12).